Here is a 154-residue protein sequence, read N- to C-terminus: Ribonuclease H (154 aa).

An RNase H type-1 domain is found at 1–142; it reads MLKQVEIFTD…CDELARRAAG (142 aa). Mg(2+) is bound by residues Asp10, Glu48, Asp70, and Asp134.

This sequence belongs to the RNase H family. Monomer. Mg(2+) is required as a cofactor.

It is found in the cytoplasm. It catalyses the reaction Endonucleolytic cleavage to 5'-phosphomonoester.. Endonuclease that specifically degrades the RNA of RNA-DNA hybrids. This is Ribonuclease H from Edwardsiella ictaluri (strain 93-146).